Here is a 956-residue protein sequence, read N- to C-terminus: DNA replication helicase (956 aa).

120-127 is a binding site for ATP; the sequence is GTAGAGKT. The disordered stretch occupies residues 658 to 694; the sequence is PINNHVDADSSQGGQSVPVSQRMEHGQEETHDIPCLS. Positions 667-678 are enriched in low complexity; it reads SSQGGQSVPVSQ. The span at 679-694 shows a compositional bias: basic and acidic residues; it reads RMEHGQEETHDIPCLS.

Belongs to the herpesviridae helicase family. As to quaternary structure, associates with the primase and the primase-associated factor to form the helicase-primase complex.

It is found in the host nucleus. Component of the helicase/primase complex. Unwinds the DNA at the replication forks and generates single-stranded DNA for both leading and lagging strand synthesis. The primase synthesizes short RNA primers on the lagging strand that the polymerase elongates using dNTPs. Possesses helicase-like motifs and therefore may act as the helicase subunit of the complex. This Human cytomegalovirus (strain Merlin) (HHV-5) protein is DNA replication helicase.